Consider the following 953-residue polypeptide: Translation initiation factor IF-2 (953 aa).

2 disordered regions span residues 48-240 (SSFS…AQQE) and 279-363 (TKLK…TERK). Basic and acidic residues-rich tracts occupy residues 80–89 (TGSEHVEKTQ), 98–111 (FKAE…EQAA), and 140–188 (QGDK…ENHK). The segment covering 191 to 207 (RFTNQKKQGRQEPQSKS) has biased composition (polar residues). Basic and acidic residues predominate over residues 229–240 (RQSETRFRAQQE). Positions 282–291 (KSSNISAKST) are enriched in polar residues. The segment covering 300–317 (ARPEKNRELTHHSQEGQK) has biased composition (basic and acidic residues). Positions 322 to 338 (SWNSQNQVRNQKNSNWN) are enriched in low complexity. The span at 339-348 (KNKKTKKGKN) shows a compositional bias: basic residues. One can recognise a tr-type G domain in the interval 454–623 (ERAPVVTIMG…LLVAEVEELK (170 aa)). Residues 463–470 (GHVDHGKT) form a G1 region. 463 to 470 (GHVDHGKT) serves as a coordination point for GTP. The tract at residues 488–492 (GITQH) is G2. The tract at residues 509–512 (DTPG) is G3. Residues 509-513 (DTPGH) and 563-566 (NKID) each bind GTP. Positions 563–566 (NKID) are G4. Residues 599–601 (SAK) form a G5 region.

The protein belongs to the TRAFAC class translation factor GTPase superfamily. Classic translation factor GTPase family. IF-2 subfamily.

It localises to the cytoplasm. Functionally, one of the essential components for the initiation of protein synthesis. Protects formylmethionyl-tRNA from spontaneous hydrolysis and promotes its binding to the 30S ribosomal subunits. Also involved in the hydrolysis of GTP during the formation of the 70S ribosomal complex. In Streptococcus pyogenes serotype M1, this protein is Translation initiation factor IF-2.